The primary structure comprises 319 residues: Acetyl esterase (319 aa).

The Involved in the stabilization of the negatively charged intermediate by the formation of the oxyanion hole motif lies at histidine 91–glycine 93. Catalysis depends on residues serine 165, aspartate 262, and histidine 292.

The protein belongs to the 'GDXG' lipolytic enzyme family. As to quaternary structure, homodimer. Interacts with MalT and MelA.

Its subcellular location is the cytoplasm. In terms of biological role, displays esterase activity towards short chain fatty esters (acyl chain length of up to 8 carbons). Able to hydrolyze triacetylglycerol (triacetin) and tributyrylglycerol (tributyrin), but not trioleylglycerol (triolein) or cholesterol oleate. Negatively regulates MalT activity by antagonizing maltotriose binding. Inhibits MelA galactosidase activity. The chain is Acetyl esterase from Escherichia coli O127:H6 (strain E2348/69 / EPEC).